The sequence spans 668 residues: Ubiquitin ligase complex F-box protein UFO1 (668 aa).

In terms of domain architecture, F-box spans 5–51; it reads GLVLQDLPPEILINIFSHLDEKDLFTLQELSTHFRNLIHDEELWKNL. Serine 511 carries the phosphoserine modification. The residue at position 514 (threonine 514) is a Phosphothreonine. UIM domains follow at residues 547–566, 583–602, and 651–668; these read DEDE…YETQ, EDDE…DERR, and NVDE…SEIN. Residues 564-578 show a composition bias toward polar residues; it reads ETQTNSSANHGNNTN. Disordered stretches follow at residues 564–585 and 599–639; these read ETQT…DEDD and DERR…TENT.

In terms of assembly, interacts with SKP1. Component of the probable SCF(UFO1) complex containing CDC53, SKP1, RBX1 and UFO1.

The protein operates within protein modification; protein ubiquitination. In terms of biological role, substrate recognition component of a SCF (SKP1-CUL1-F-box protein) E3 ubiquitin-protein ligase complex which mediates the ubiquitination and subsequent proteasomal degradation of target proteins. Probably recognizes and binds to phosphorylated target proteins. The chain is Ubiquitin ligase complex F-box protein UFO1 (UFO1) from Saccharomyces cerevisiae (strain ATCC 204508 / S288c) (Baker's yeast).